The sequence spans 298 residues: 2-dehydro-3-deoxy-D-arabinonate dehydratase (298 aa).

Ile-86 contributes to the substrate binding site. Mg(2+)-binding residues include Glu-148, Glu-150, and Asp-169. Lys-187 and Thr-261 together coordinate substrate.

The protein belongs to the FAH family. Homotetramer. The cofactor is Mg(2+). Ca(2+) serves as cofactor.

It catalyses the reaction 2-dehydro-3-deoxy-D-arabinonate = 2,5-dioxopentanoate + H2O. In terms of biological role, participates in a pentose oxidation pathway that converts D-arabinonate to 2-oxoglutarate. The protein is 2-dehydro-3-deoxy-D-arabinonate dehydratase of Saccharolobus solfataricus (strain ATCC 35092 / DSM 1617 / JCM 11322 / P2) (Sulfolobus solfataricus).